The following is a 504-amino-acid chain: Fibroblast growth factor receptor-like 1 (504 aa).

The N-terminal stretch at 1 to 24 (MTPSPLLLLLLPPLLLGAFPPAAA) is a signal peptide. The Extracellular portion of the chain corresponds to 25–378 (ARGPPKMADK…SSSATSLPWP (354 aa)). Residues 29 to 115 (PKMADKVVPR…GSLSVNYTLV (87 aa)) enclose the Ig-like C2-type 1 domain. A disulfide bridge links cysteine 51 with cysteine 99. N-linked (GlcNAc...) asparagine glycosylation occurs at asparagine 111. A disordered region spans residues 123 to 155 (GKESLGPDSSSGGQEDPASQQWARPRFTQPSKM). Residues 129-144 (PDSSSGGQEDPASQQW) show a composition bias toward polar residues. 2 Ig-like C2-type domains span residues 147-237 (PRFT…YKVD) and 246-354 (PVLT…AFLT). The cysteines at positions 172 and 221 are disulfide-linked. N-linked (GlcNAc...) asparagine glycosylation is found at asparagine 231, asparagine 255, and asparagine 293. Cysteine 268 and cysteine 338 are oxidised to a cystine. A helical transmembrane segment spans residues 379–399 (VVIGIPAGAVFILGTLLLWLC). The Cytoplasmic segment spans residues 400-504 (QAQKKPCTPA…KVHQHIHYQC (105 aa)). Over residues 407–418 (TPAPAPPLPGHR) the composition is skewed to pro residues. The segment at 407–435 (TPAPAPPLPGHRPPGTARDRSGDKDLPSL) is disordered. Basic and acidic residues predominate over residues 423–432 (ARDRSGDKDL).

Interacts with FGF2 with a low affinity. In terms of tissue distribution, expressed preferentially in cartilaginous tissues and pancreas. Highly expressed in the liver, kidney, heart, brain and skeletal muscle. Weakly expressed in the lung, small intestine and spleen.

It is found in the membrane. In terms of biological role, has a negative effect on cell proliferation. This chain is Fibroblast growth factor receptor-like 1 (FGFRL1), found in Homo sapiens (Human).